Consider the following 1117-residue polypeptide: Telomerase reverse transcriptase (1117 aa).

The segment at 1–191 is TEN; it reads MQKINNINNN…VKQKKWYKNN (191 aa). Residues 217 to 519 form an RBD region; sequence NQYIYPEIQR…ENLEKVEEKL (303 aa). Positions 517-881 constitute a Reverse transcriptase domain; it reads EKLIPEDSFQ…NECQWIGKSI (365 aa). Residues 520–887 form an RT region; it reads IPEDSFQKYP…GKSIDMNTLE (368 aa). Asp618 serves as a coordination point for Mg(2+). A TRAP region spans residues 638–742; the sequence is SDLIQDTYFI…NQDKPRCITK (105 aa). Residues Asp815 and Asp816 each coordinate Mg(2+). Positions 888 to 1117 are CTE; that stretch reads IKSIQKQTQQ…SAKSNQQNTN (230 aa).

This sequence belongs to the reverse transcriptase family. Telomerase subfamily. Component of the telomerase holoenzyme complex, composed of the catalytic core (the catalytic subunit TERT, the telomerase RNA template component TER and TAP65/p65), which is associated with two heterotrimeric subcomplexes: (i) the replication protein A (RPA)-related subcomplex, composed of TEB1, RPA2/TEB2 and RPA3/TEB3 and (ii) the CST-like subcomplex, composed of TAP75/p75, TAP45/p45 and TAP19/p19. TEB1 and the CST-like subcomplex are tethered to the catalytic core by TAP50/p50.

The protein localises to the nucleus. It is found in the chromosome. It localises to the telomere. The enzyme catalyses DNA(n) + a 2'-deoxyribonucleoside 5'-triphosphate = DNA(n+1) + diphosphate. Its function is as follows. Catalytic component of telomerase, an essential ribonucleoprotein enzyme that copies new telomeric repeats onto chromosome ends by repetitively synthesizing the short telomere-repeat sequence 5'-TTGGGG-3' using an RNA template component TER. TERT is a reverse transcriptase that adds simple sequence repeats to chromosome ends by copying a template sequence within the RNA component of the enzyme. The protein is Telomerase reverse transcriptase of Tetrahymena thermophila (strain SB210).